We begin with the raw amino-acid sequence, 90 residues long: UPF0184 protein (90 aa).

A coiled-coil region spans residues 16–78 (DETKEEMVEL…QSLETEQNTE (63 aa)). The disordered stretch occupies residues 57–90 (SQQARQELQAERQSLETEQNTEPSTKSDQEQKKQ). Basic and acidic residues predominate over residues 81-90 (TKSDQEQKKQ).

This sequence belongs to the UPF0184 (EST00098) family.

The sequence is that of UPF0184 protein from Branchiostoma floridae (Florida lancelet).